The sequence spans 554 residues: Glucose-6-phosphate isomerase 2 (554 aa).

Glu-359 functions as the Proton donor in the catalytic mechanism. Residues His-390 and Lys-518 contribute to the active site.

Belongs to the GPI family.

Its subcellular location is the cytoplasm. The enzyme catalyses alpha-D-glucose 6-phosphate = beta-D-fructose 6-phosphate. The protein operates within carbohydrate biosynthesis; gluconeogenesis. It functions in the pathway carbohydrate degradation; glycolysis; D-glyceraldehyde 3-phosphate and glycerone phosphate from D-glucose: step 2/4. In terms of biological role, catalyzes the reversible isomerization of glucose-6-phosphate to fructose-6-phosphate. This is Glucose-6-phosphate isomerase 2 from Pseudomonas putida (strain ATCC 47054 / DSM 6125 / CFBP 8728 / NCIMB 11950 / KT2440).